Reading from the N-terminus, the 649-residue chain is uncharacterized protein (649 aa).

The protein resides in the nucleus. It is found in the cytoplasm. This is an uncharacterized protein from Schizosaccharomyces pombe (strain 972 / ATCC 24843) (Fission yeast).